Reading from the N-terminus, the 785-residue chain is Proprotein convertase subtilisin/kexin type 7 (785 aa).

A signal peptide spans 1–37 (MPKGRQKVPHLDAPLGLPTCLWLELAGLFLLVPWVMG). The propeptide occupies 38–141 (LAGTGGPDGQ…EQRLLRRAKR (104 aa)). Residues 142–667 (SVHFNDPKYP…YTITPNTLKT (526 aa)) are Extracellular-facing. In terms of domain architecture, Peptidase S8 spans 153-473 (QWHLNNRRSP…FGLLNAWRLV (321 aa)). Asn-167 and Asn-175 each carry an N-linked (GlcNAc...) asparagine glycan. The Charge relay system role is filled by Asp-187. The tract at residues 197–219 (IAPNYSPEGSYDLNSNDPDPMPH) is disordered. The active-site Charge relay system is the His-228. Asn-241 carries N-linked (GlcNAc...) asparagine glycosylation. The active-site Charge relay system is the Ser-406. In terms of domain architecture, P/Homo B spans 481-618 (SVPYLASYVS…QLTLYGSVWS (138 aa)). N-linked (GlcNAc...) asparagine glycosylation is present at Asn-511. The chain crosses the membrane as a helical span at residues 668–688 (LVLVGCFTVFWTVYYMLEVYL). The Cytoplasmic portion of the chain corresponds to 689 to 785 (SQRNVASNQV…VPHGKEEQIC (97 aa)). A disordered region spans residues 700 to 751 (RSGPCHWPHRSRKAKEEGTELESVPLCSSKDPDEVETESRGPPTTSDLLAPD).

This sequence belongs to the peptidase S8 family. Requires Ca(2+) as cofactor. Post-translationally, cysteine residues in the cytoplasmic tail are probably palmitoylated. N-glycosylated. In terms of tissue distribution, expressed in spleen, thymus, prostate, testis, ovary, small intestine, colon and peripheral blood leukocyte.

The protein resides in the golgi apparatus. It localises to the trans-Golgi network membrane. Its activity is regulated as follows. Inhibited by zinc and copper. Its function is as follows. Serine endoprotease that processes various proproteins by cleavage at paired basic amino acids, recognizing the RXXX[KR]R consensus motif. Likely functions in the constitutive secretory pathway. This is Proprotein convertase subtilisin/kexin type 7 (PCSK7) from Homo sapiens (Human).